A 132-amino-acid chain; its full sequence is uncharacterized protein (132 aa).

Positions 1–18 are cleaved as a signal peptide; it reads MRKIISMLFIPLFIFAMA.

This is an uncharacterized protein from Aquifex aeolicus (strain VF5).